Consider the following 338-residue polypeptide: Isopenicillin N synthase (338 aa).

Residues Arg89, Tyr93, Ser185, and Tyr191 each contribute to the isopenicillin N site. Positions 89, 93, 185, 191, 216, and 218 each coordinate N-[(5S)-5-amino-5-carboxypentanoyl]-L-cysteinyl-D-valine. Positions 182 to 290 (TLSSVVLIRY…RQSLPFFVNL (109 aa)) constitute a Fe2OG dioxygenase domain. Residues His216, Asp218, and His272 each coordinate Fe(2+). Residue Arg281 participates in 2-oxoglutarate binding. Residue Ser283 participates in isopenicillin N binding. Ser283 serves as a coordination point for N-[(5S)-5-amino-5-carboxypentanoyl]-L-cysteinyl-D-valine.

It belongs to the iron/ascorbate-dependent oxidoreductase family. Monomer. The cofactor is Fe(2+).

Its subcellular location is the cytoplasm. It is found in the cytosol. The enzyme catalyses N-[(5S)-5-amino-5-carboxypentanoyl]-L-cysteinyl-D-valine + O2 = isopenicillin N + 2 H2O. It participates in antibiotic biosynthesis; penicillin G biosynthesis; penicillin G from L-alpha-aminoadipate and L-cysteine and L-valine: step 2/3. In terms of biological role, isopenicillin N synthase; part of the gene cluster that mediates the biosynthesis of penicillin, the world's most important antibiotic. IpnA catalyzes the cyclization of the tripeptide N-[(5S)-5-amino-5-carboxypentanoyl]-L-cysteinyl-D-valine (LLD-ACV or ACV) to form isopenicillin N (IPN) that contains the beta-lactam nucleus. The penicillin biosynthesis occurs via 3 enzymatic steps, the first corresponding to the production of the tripeptide N-[(5S)-5-amino-5-carboxypentanoyl]-L-cysteinyl-D-valine (LLD-ACV or ACV) by the NRPS pcbAB. The tripeptide ACV is then cyclized to isopenicillin N (IPN) by the isopenicillin N synthase pcbC that forms the beta-lactam nucleus. Finally, the alpha-aminoadipyl side chain is exchanged for phenylacetic acid by the isopenicillin N acyltransferase penDE to yield penicillin in the peroxisomal matrix. This chain is Isopenicillin N synthase (PCBC), found in Hapsidospora chrysogena (Acremonium chrysogenum).